Consider the following 417-residue polypeptide: NADH-quinone oxidoreductase subunit D (417 aa).

Belongs to the complex I 49 kDa subunit family. NDH-1 is composed of 14 different subunits. Subunits NuoB, C, D, E, F, and G constitute the peripheral sector of the complex.

It localises to the cell inner membrane. It carries out the reaction a quinone + NADH + 5 H(+)(in) = a quinol + NAD(+) + 4 H(+)(out). Its function is as follows. NDH-1 shuttles electrons from NADH, via FMN and iron-sulfur (Fe-S) centers, to quinones in the respiratory chain. The immediate electron acceptor for the enzyme in this species is believed to be ubiquinone. Couples the redox reaction to proton translocation (for every two electrons transferred, four hydrogen ions are translocated across the cytoplasmic membrane), and thus conserves the redox energy in a proton gradient. In Nitrosomonas europaea (strain ATCC 19718 / CIP 103999 / KCTC 2705 / NBRC 14298), this protein is NADH-quinone oxidoreductase subunit D.